A 199-amino-acid polypeptide reads, in one-letter code: Probable chemoreceptor glutamine deamidase CheD (199 aa).

It belongs to the CheD family.

It catalyses the reaction L-glutaminyl-[protein] + H2O = L-glutamyl-[protein] + NH4(+). Probably deamidates glutamine residues to glutamate on methyl-accepting chemotaxis receptors (MCPs), playing an important role in chemotaxis. The chain is Probable chemoreceptor glutamine deamidase CheD from Cereibacter sphaeroides (strain ATCC 17025 / ATH 2.4.3) (Rhodobacter sphaeroides).